The chain runs to 1066 residues: Ribosomal protein S6 kinase delta-1 (1066 aa).

The PX domain occupies 8–132 (SADLARFYTV…DFFKGGIIND (125 aa)). Residues 207–228 (VASDSEQSKTEEERESRSLFPG) form a disordered region. Residues 212-223 (EQSKTEEERESR) show a composition bias toward basic and acidic residues. In terms of domain architecture, MIT spans 277–305 (VQGESSPTRREAVKRRTAEYLMRAESISS). 5 positions are modified to phosphoserine: serine 282, serine 423, serine 427, serine 449, and serine 455. Positions 344 to 445 (GVIDKVLLVM…PTLAKVHLQQ (102 aa)) constitute a Protein kinase 1 domain. A disordered region spans residues 441 to 509 (VHLQQPTSSP…SGSSSEEECT (69 aa)). Positions 448-458 (SSPQDSSSFES) are enriched in low complexity. The segment covering 474-483 (SSLTPSSQDD) has biased composition (polar residues). Residues 492–503 (DSSPKWPDSGSS) show a composition bias toward low complexity. Phosphoserine is present on residues serine 494, serine 528, serine 583, serine 605, serine 608, serine 640, serine 661, serine 664, serine 667, and serine 794. Residues 553–596 (HLAADSDSPSTQLRAHELKFFPNDDPEAVSSPRTSDSLSRSKNS) form a disordered region. Low complexity predominate over residues 582–593 (SSPRTSDSLSRS). The Protein kinase 2 domain maps to 794–1056 (SSDPKFQGLG…VEDIKSHPFF (263 aa)). ATP is bound by residues 801-809 (GLGVVESAV) and arginine 820. Serine 872 carries the post-translational modification Phosphoserine. Aspartate 929 acts as the Proton acceptor in catalysis.

It belongs to the protein kinase superfamily. Ser/Thr protein kinase family. S6 kinase subfamily. As to quaternary structure, interacts with SPHK1 and phosphatidylinositol 3-phosphate. Interacts (via PX domain) with PRDX3. As to expression, highly expressed in testis, skeletal muscle, brain, heart, placenta, kidney and liver and weakly expressed in thymus, small intestine, lung and colon.

It is found in the cytoplasm. Its subcellular location is the membrane. The protein resides in the early endosome. It catalyses the reaction L-seryl-[protein] + ATP = O-phospho-L-seryl-[protein] + ADP + H(+). The catalysed reaction is L-threonyl-[protein] + ATP = O-phospho-L-threonyl-[protein] + ADP + H(+). Functionally, may be involved in transmitting sphingosine-1 phosphate (SPP)-mediated signaling into the cell. Plays a role in the recruitment of PRDX3 to early endosomes. The sequence is that of Ribosomal protein S6 kinase delta-1 (RPS6KC1) from Homo sapiens (Human).